The sequence spans 226 residues: Orotate phosphoribosyltransferase (226 aa).

Lys-30 lines the 5-phospho-alpha-D-ribose 1-diphosphate pocket. Position 38–39 (38–39 (FF)) interacts with orotate. Residues 76-77 (YK), Arg-106, Lys-107, Lys-110, His-112, and 132-140 (DDVMTAGTA) contribute to the 5-phospho-alpha-D-ribose 1-diphosphate site. Orotate-binding residues include Thr-136 and Arg-164.

This sequence belongs to the purine/pyrimidine phosphoribosyltransferase family. PyrE subfamily. As to quaternary structure, homodimer.

The enzyme catalyses orotidine 5'-phosphate + diphosphate = orotate + 5-phospho-alpha-D-ribose 1-diphosphate. Its pathway is pyrimidine metabolism; UMP biosynthesis via de novo pathway; UMP from orotate: step 1/2. Functionally, catalyzes the transfer of a ribosyl phosphate group from 5-phosphoribose 1-diphosphate to orotate, leading to the formation of orotidine monophosphate (OMP). This Kluyveromyces lactis (strain ATCC 8585 / CBS 2359 / DSM 70799 / NBRC 1267 / NRRL Y-1140 / WM37) (Yeast) protein is Orotate phosphoribosyltransferase (URA5).